We begin with the raw amino-acid sequence, 358 residues long: Mannonate dehydratase (358 aa).

This sequence belongs to the mannonate dehydratase family. Fe(2+) serves as cofactor. Mn(2+) is required as a cofactor.

It carries out the reaction D-mannonate = 2-dehydro-3-deoxy-D-gluconate + H2O. Its pathway is carbohydrate metabolism; pentose and glucuronate interconversion. Catalyzes the dehydration of D-mannonate. In Lachnoclostridium phytofermentans (strain ATCC 700394 / DSM 18823 / ISDg) (Clostridium phytofermentans), this protein is Mannonate dehydratase.